We begin with the raw amino-acid sequence, 831 residues long: Multiphosphoryl transfer protein (831 aa).

Residues 1–90 (MLTIQFLCPL…EYIQVRFIDS (90 aa)) enclose the HPr domain. The active-site Pros-phosphohistidine intermediate; for HPr activity is His15. His15 bears the Phosphohistidine; by EI mark. A PTS EI region spans residues 119-650 (GNVLASGVGV…AVKSQLRQLD (532 aa)). Residue His298 is the Tele-phosphohistidine intermediate; for PTS EI activity of the active site. His298 carries the phosphohistidine; by autocatalysis modification. 2 residues coordinate phosphoenolpyruvate: Arg405 and Arg441. Glu540 and Asp564 together coordinate Mg(2+). Residues 563–564 (ND) and Arg574 each bind phosphoenolpyruvate. Cys611 functions as the Proton donor; for EI activity in the catalytic mechanism. The PTS EIIA type-2 domain occupies 685 to 828 (PLLALENIFV…QSILTLLETE (144 aa)). Residue His747 is the Tele-phosphohistidine intermediate; for PTS EIIA activity of the active site. At His747 the chain carries Phosphohistidine; by HPr.

The protein belongs to the PEP-utilizing enzyme family. Mg(2+) serves as cofactor.

The protein localises to the cytoplasm. It catalyses the reaction L-histidyl-[protein] + phosphoenolpyruvate = N(pros)-phospho-L-histidyl-[protein] + pyruvate. The catalysed reaction is D-fructose(out) + N(pros)-phospho-L-histidyl-[protein] = D-fructose 1-phosphate(in) + L-histidyl-[protein]. Its function is as follows. Multifunctional protein that includes general (non sugar-specific) and sugar-specific components of the phosphoenolpyruvate-dependent sugar phosphotransferase system (sugar PTS). This major carbohydrate active transport system catalyzes the phosphorylation of incoming sugar substrates concomitantly with their translocation across the cell membrane. The enzyme II FryABC PTS system is involved in fructose transport. The protein is Multiphosphoryl transfer protein (fryA) of Escherichia coli O157:H7.